Here is a 346-residue protein sequence, read N- to C-terminus: Inner membrane protein YnjI (346 aa).

Residues 1–38 (MKKVLLQNHPGSEKYSFNGWEIFNSNFERMIKENKAML) are Periplasmic-facing. A helical membrane pass occupies residues 39 to 59 (LCKWGFYLTCVVAVMFVFAAI). The Cytoplasmic segment spans residues 60 to 68 (TSNGLNERG). A helical membrane pass occupies residues 69–89 (LITAGCSFLYLLIMMGLIVRA). Over 90–234 (GFKAKKEQLH…DCANHSSGKS (145 aa)) the chain is Periplasmic. Residues 235 to 255 (SAKLIWAAELSWMISISSTAF) form a helical membrane-spanning segment. The Cytoplasmic portion of the chain corresponds to 256–346 (QNGTIEEELA…PWGASSVKYS (91 aa)).

The protein localises to the cell inner membrane. In Escherichia coli (strain K12), this protein is Inner membrane protein YnjI (ynjI).